A 166-amino-acid chain; its full sequence is Phosphopantetheine adenylyltransferase (166 aa).

A substrate-binding site is contributed by serine 11. ATP contacts are provided by residues 11–12 (SF) and histidine 19. Positions 43, 76, and 90 each coordinate substrate. Residues 91 to 93 (GLR), glutamate 101, and 126 to 132 (LQPVSSS) each bind ATP.

It belongs to the bacterial CoaD family. As to quaternary structure, homohexamer. The cofactor is Mg(2+).

The protein localises to the cytoplasm. The enzyme catalyses (R)-4'-phosphopantetheine + ATP + H(+) = 3'-dephospho-CoA + diphosphate. The protein operates within cofactor biosynthesis; coenzyme A biosynthesis; CoA from (R)-pantothenate: step 4/5. Reversibly transfers an adenylyl group from ATP to 4'-phosphopantetheine, yielding dephospho-CoA (dPCoA) and pyrophosphate. This chain is Phosphopantetheine adenylyltransferase, found in Streptococcus equi subsp. equi (strain 4047).